A 62-amino-acid chain; its full sequence is Beta-defensin 133 (62 aa).

The first 21 residues, 1-21 (MKIHIFLFVLFFFLVPIATRG), serve as a signal peptide directing secretion. Disulfide bonds link Cys32/Cys60 and Cys39/Cys53.

It belongs to the beta-defensin family.

It localises to the secreted. Functionally, has antibacterial activity. The polypeptide is Beta-defensin 133 (DEFB133) (Pan troglodytes (Chimpanzee)).